Reading from the N-terminus, the 172-residue chain is Probable chorismate pyruvate-lyase (172 aa).

M37, R79, L117, and E158 together coordinate substrate.

Belongs to the UbiC family.

It is found in the cytoplasm. The catalysed reaction is chorismate = 4-hydroxybenzoate + pyruvate. It participates in cofactor biosynthesis; ubiquinone biosynthesis. Functionally, removes the pyruvyl group from chorismate, with concomitant aromatization of the ring, to provide 4-hydroxybenzoate (4HB) for the ubiquinone pathway. In Bartonella quintana (strain Toulouse) (Rochalimaea quintana), this protein is Probable chorismate pyruvate-lyase.